Consider the following 632-residue polypeptide: DNA topoisomerase 4 subunit B (632 aa).

Residues tyrosine 5, asparagine 42, aspartate 69, 110 to 116 (GLHGVGI), and lysine 334 contribute to the ATP site. The 114-residue stretch at 412–525 (TELFLVEGDS…DGHVYVAMPP (114 aa)) folds into the Toprim domain. 3 residues coordinate Mg(2+): glutamate 418, aspartate 490, and aspartate 492.

It belongs to the type II topoisomerase family. ParE type 1 subfamily. Heterotetramer composed of ParC and ParE. Requires Mg(2+) as cofactor. It depends on Mn(2+) as a cofactor. Ca(2+) is required as a cofactor.

It carries out the reaction ATP-dependent breakage, passage and rejoining of double-stranded DNA.. Topoisomerase IV is essential for chromosome segregation. It relaxes supercoiled DNA. Performs the decatenation events required during the replication of a circular DNA molecule. This Haemophilus influenzae (strain ATCC 51907 / DSM 11121 / KW20 / Rd) protein is DNA topoisomerase 4 subunit B.